A 281-amino-acid chain; its full sequence is NADPH-dependent 7-cyano-7-deazaguanine reductase (281 aa).

Residue 87 to 89 (VES) participates in substrate binding. Position 89–90 (89–90 (SK)) interacts with NADPH. The Thioimide intermediate role is filled by Cys188. Asp195 (proton donor) is an active-site residue. 227–228 (HE) is a binding site for substrate. An NADPH-binding site is contributed by 256–257 (RG).

This sequence belongs to the GTP cyclohydrolase I family. QueF type 2 subfamily. Homodimer.

It localises to the cytoplasm. It carries out the reaction 7-aminomethyl-7-carbaguanine + 2 NADP(+) = 7-cyano-7-deazaguanine + 2 NADPH + 3 H(+). It participates in tRNA modification; tRNA-queuosine biosynthesis. Its function is as follows. Catalyzes the NADPH-dependent reduction of 7-cyano-7-deazaguanine (preQ0) to 7-aminomethyl-7-deazaguanine (preQ1). The sequence is that of NADPH-dependent 7-cyano-7-deazaguanine reductase from Aliivibrio fischeri (strain MJ11) (Vibrio fischeri).